The primary structure comprises 262 residues: Glucosamine-6-phosphate deaminase (262 aa).

The Proton acceptor; for enolization step role is filled by Asp-63. Catalysis depends on Asn-129, which acts as the For ring-opening step. His-131 acts as the Proton acceptor; for ring-opening step in catalysis. Glu-136 functions as the For ring-opening step in the catalytic mechanism.

It belongs to the glucosamine/galactosamine-6-phosphate isomerase family. NagB subfamily.

The catalysed reaction is alpha-D-glucosamine 6-phosphate + H2O = beta-D-fructose 6-phosphate + NH4(+). It participates in amino-sugar metabolism; N-acetylneuraminate degradation; D-fructose 6-phosphate from N-acetylneuraminate: step 5/5. In terms of biological role, catalyzes the reversible isomerization-deamination of glucosamine 6-phosphate (GlcN6P) to form fructose 6-phosphate (Fru6P) and ammonium ion. The sequence is that of Glucosamine-6-phosphate deaminase from Bacillus cereus (strain G9842).